The following is a 363-amino-acid chain: Peptide chain release factor 1 (363 aa).

Q237 bears the N5-methylglutamine mark. The span at E284 to R296 shows a compositional bias: basic and acidic residues. Residues E284–R305 are disordered.

Belongs to the prokaryotic/mitochondrial release factor family. In terms of processing, methylated by PrmC. Methylation increases the termination efficiency of RF1.

It is found in the cytoplasm. Its function is as follows. Peptide chain release factor 1 directs the termination of translation in response to the peptide chain termination codons UAG and UAA. The sequence is that of Peptide chain release factor 1 from Shewanella baltica (strain OS195).